The following is a 333-amino-acid chain: MSFNLRNRSFLTLSDFSTREMEYMLNLAEDLKKAKYAGYEGNRLAGKNIALIFEKDSTRTRCAFEVGAKDEGAHVTYLGPSGSHIGYKESVKDTARVLGGMFDGIEYRGFSQRSAETLAEYSGVPVWNGLTDEDHPTQVLADFLTAKEVLKKEYKDIKFAFVGDGQDNVSNALMLGAAVMGMEYHVVTPKELEPTKDVLDKANAIAAKTGGKIVVENDVKAGVKNMDVIYTDVWVSMGEPDEMWQKRIKLLKPYQVTKEVMEATENPNAIFEHCLPAFHNTDTSIGKKIEEKYGLSEMEVTDEVFESSQSVVFQEAENRMHTIKAVMVATLGD.

Residues 57–60, R108, and 135–138 each bind carbamoyl phosphate; these read STRT and HPTQ. L-ornithine contacts are provided by residues N168, D232, and 236–237; that span reads SM. Carbamoyl phosphate contacts are provided by residues 274–275 and R319; that span reads CL.

It belongs to the aspartate/ornithine carbamoyltransferase superfamily. OTCase family.

It is found in the cytoplasm. The enzyme catalyses carbamoyl phosphate + L-ornithine = L-citrulline + phosphate + H(+). It participates in amino-acid degradation; L-arginine degradation via ADI pathway; carbamoyl phosphate from L-arginine: step 2/2. Its function is as follows. Reversibly catalyzes the transfer of the carbamoyl group from carbamoyl phosphate (CP) to the N(epsilon) atom of ornithine (ORN) to produce L-citrulline. This is Ornithine carbamoyltransferase from Pediococcus pentosaceus (strain ATCC 25745 / CCUG 21536 / LMG 10740 / 183-1w).